Reading from the N-terminus, the 51-residue chain is Ribosome biogenesis protein Nop10 (51 aa).

This sequence belongs to the NOP10 family.

In terms of biological role, involved in ribosome biogenesis; more specifically in 18S rRNA pseudouridylation and in cleavage of pre-rRNA. The chain is Ribosome biogenesis protein Nop10 from Nitrosopumilus maritimus (strain SCM1).